Consider the following 87-residue polypeptide: Probable acyl carrier protein PigG (87 aa).

Residues 1–78 enclose the Carrier domain; sequence MLESKLINHI…SMVALVQRLK (78 aa). An O-(pantetheine 4'-phosphoryl)serine modification is found at Ser36.

It participates in antibiotic biosynthesis; prodigiosin biosynthesis. In terms of biological role, involved in the biosynthesis of 4-methoxy-2,2'-bipyrrole-5-carbaldehyde (MBC), one of the terminal products involved in the biosynthesis of the red antibiotic prodigiosin (Pig). Carrier of the L-prolyl group transferred from L-prolyl-AMP by PigI. The protein is Probable acyl carrier protein PigG of Serratia sp. (strain ATCC 39006) (Prodigiosinella confusarubida).